The chain runs to 126 residues: Fluoride-specific ion channel FluC (126 aa).

Helical transmembrane passes span 6 to 26, 36 to 56, 68 to 88, and 99 to 119; these read FVAV…FAVL, YGTL…VGFF, LLAV…SSEV, and IGML…MLGL. Na(+) contacts are provided by Gly76 and Thr79.

The protein belongs to the fluoride channel Fluc/FEX (TC 1.A.43) family.

It is found in the cell inner membrane. The enzyme catalyses fluoride(in) = fluoride(out). Na(+) is not transported, but it plays an essential structural role and its presence is essential for fluoride channel function. Its function is as follows. Fluoride-specific ion channel. Important for reducing fluoride concentration in the cell, thus reducing its toxicity. The sequence is that of Fluoride-specific ion channel FluC from Ralstonia nicotianae (strain ATCC BAA-1114 / GMI1000) (Ralstonia solanacearum).